The sequence spans 576 residues: MDIKLLYRLAKYLRCYKKDLIIVMISLLSVSASLLLIGSVFRNLVDKGLSKDHISSVDNSILYICLLIIILSIASFFRSYFINNVAEKAVNQIRKEAYSNLINYEIEEFEELKIGDIISRLTNDIDQISTLIVNFLSFFIRNSVMLIGSITLMFFESFKLASIVIITIPILLIPLIKFGKHVKVLSKKALESKSLLASDINETFNNIRAIYAFNHQINKIADFDTKLQNYLIYCKTRLKIRALFFAISIAVIFLAITLVVWIGASDIVKGHLSAGQIISFIYYAIIAGVSCGGIFELLSEMHLPVTALERIITIIDKTPIAHNNYLELNNSDPISIEFKNVDFTYHSRPNLRIINNMSLKINANKFLGIVGRSGAGKSTVIQLLLRFYRQENGTILINNQDITLLNPAEIRKLIAYVPQEASIFSGTIKSNIIFGNNEASDDEINEIIKITGIEEFAAKLHDGINAKIGERGVRLSGGQKQRIAIARALLRMPQILLLDEAMSALDTMSEQKLLESIKKIMRGNIIISIAHRISSIESADYILVIDKGGVVAEGSHNDLSKNSEIYRNICREQLTI.

An ABC transmembrane type-1 domain is found at 20 to 303 (LIIVMISLLS…IFELLSEMHL (284 aa)). Transmembrane regions (helical) follow at residues 21 to 41 (IIVM…GSVF), 57 to 77 (VDNS…ASFF), 135 to 155 (FLSF…LMFF), 158 to 178 (FKLA…LIKF), 242 to 262 (ALFF…VVWI), and 277 to 297 (IISF…IFEL). Residues 336–572 (IEFKNVDFTY…SEIYRNICRE (237 aa)) enclose the ABC transporter domain. 371–378 (GRSGAGKS) is a binding site for ATP.

This sequence belongs to the ABC transporter superfamily. As to quaternary structure, homodimer.

It localises to the cell inner membrane. Its function is as follows. Part of an ABC transporter complex. Transmembrane domains (TMD) form a pore in the inner membrane and the ATP-binding domain (NBD) is responsible for energy generation. The polypeptide is Putative export ATP-binding/permease protein RC1073 (Rickettsia conorii (strain ATCC VR-613 / Malish 7)).